The sequence spans 314 residues: Dihydroorotate dehydrogenase (fumarate) (314 aa).

Residues alanine 21 and 45–46 (KS) each bind FMN. Substrate-binding positions include lysine 45, 69–73 (NSMGL), and asparagine 129. FMN is bound at residue asparagine 129. The active-site Nucleophile is cysteine 132. Asparagine 134 contacts substrate. Positions 166 and 195 each coordinate FMN. Residue 196–197 (NS) participates in substrate binding. FMN is bound by residues glycine 224, 251–252 (GG), and 273–274 (GT).

This sequence belongs to the dihydroorotate dehydrogenase family. Type 1 subfamily. In terms of assembly, homodimer. It depends on FMN as a cofactor.

It localises to the cytoplasm. The catalysed reaction is (S)-dihydroorotate + fumarate = orotate + succinate. It functions in the pathway pyrimidine metabolism; UMP biosynthesis via de novo pathway. Catalyzes the conversion of dihydroorotate to orotate with fumarate as the electron acceptor. Molecular oxygen can replace fumarate in vitro. In Trypanosoma cruzi (strain CL Brener), this protein is Dihydroorotate dehydrogenase (fumarate) (pyr4).